The chain runs to 227 residues: Large ribosomal subunit protein uL3 (227 aa).

The segment at 146–167 is disordered; sequence RGPMAHGSKFHRHQGSNGACSS.

The protein belongs to the universal ribosomal protein uL3 family. As to quaternary structure, part of the 50S ribosomal subunit. Forms a cluster with proteins L14 and L19.

In terms of biological role, one of the primary rRNA binding proteins, it binds directly near the 3'-end of the 23S rRNA, where it nucleates assembly of the 50S subunit. This chain is Large ribosomal subunit protein uL3, found in Agathobacter rectalis (strain ATCC 33656 / DSM 3377 / JCM 17463 / KCTC 5835 / VPI 0990) (Eubacterium rectale).